Consider the following 364-residue polypeptide: Dual-specificity RNA methyltransferase RlmN (364 aa).

The active-site Proton acceptor is the Glu91. Positions 97–333 (EDDRGTLCIS…TTTRKTRGDD (237 aa)) constitute a Radical SAM core domain. Residues Cys104 and Cys338 are joined by a disulfide bond. The [4Fe-4S] cluster site is built by Cys111, Cys115, and Cys118. Residues 164–165 (GE), Ser196, 218–220 (SLH), and Asn295 each bind S-adenosyl-L-methionine. Catalysis depends on Cys338, which acts as the S-methylcysteine intermediate.

The protein belongs to the radical SAM superfamily. RlmN family. It depends on [4Fe-4S] cluster as a cofactor.

It is found in the cytoplasm. The catalysed reaction is adenosine(2503) in 23S rRNA + 2 reduced [2Fe-2S]-[ferredoxin] + 2 S-adenosyl-L-methionine = 2-methyladenosine(2503) in 23S rRNA + 5'-deoxyadenosine + L-methionine + 2 oxidized [2Fe-2S]-[ferredoxin] + S-adenosyl-L-homocysteine. The enzyme catalyses adenosine(37) in tRNA + 2 reduced [2Fe-2S]-[ferredoxin] + 2 S-adenosyl-L-methionine = 2-methyladenosine(37) in tRNA + 5'-deoxyadenosine + L-methionine + 2 oxidized [2Fe-2S]-[ferredoxin] + S-adenosyl-L-homocysteine. Its function is as follows. Specifically methylates position 2 of adenine 2503 in 23S rRNA and position 2 of adenine 37 in tRNAs. m2A2503 modification seems to play a crucial role in the proofreading step occurring at the peptidyl transferase center and thus would serve to optimize ribosomal fidelity. The chain is Dual-specificity RNA methyltransferase RlmN from Dechloromonas aromatica (strain RCB).